A 451-amino-acid chain; its full sequence is Vacuolar cation/proton exchanger 1a (451 aa).

The Cytoplasmic portion of the chain corresponds to 1 to 58; sequence MEAAAAMEAGRKLAARHPHGRSRTAHNMSSSSLRKKSDAALVRKVPVAPLRPLLANLQ. Residues 9–37 form a disordered region; sequence AGRKLAARHPHGRSRTAHNMSSSSLRKKS. The span at 13–24 shows a compositional bias: basic residues; the sequence is LAARHPHGRSRT. Residues 59-79 form a helical membrane-spanning segment; the sequence is EVFLATKLAVLFPAVPLAIAA. Residues 80–86 lie on the Vacuolar side of the membrane; the sequence is QCFRFDQ. Residues 87–107 traverse the membrane as a helical segment; it reads VWVFALSLLGLIPLAERVSFL. The Cytoplasmic segment spans residues 108–120; that stretch reads TEQIALYTGPTVG. Residues 121-141 traverse the membrane as a helical segment; it reads GLLNATCGNATELIIALFALL. The cation selection stretch occupies residues 128–163; sequence GNATELIIALFALLKGKIEVVKCSLLGSVLSNLLLV. The Vacuolar portion of the chain corresponds to 142–153; it reads KGKIEVVKCSLL. The helical transmembrane segment at 154 to 174 threads the bilayer; that stretch reads GSVLSNLLLVLGTSLFCGGVV. Topologically, residues 175–191 are cytoplasmic; that stretch reads NLGARQPYDRNQSDVST. A helical membrane pass occupies residues 192–212; the sequence is ALLFLAVLCHSAPLLLRYAVA. Over 213 to 228 the chain is Vacuolar; it reads AGEHSVSATSAAASLD. A helical membrane pass occupies residues 229-249; it reads LSRACSFVMLASYVAYLFFQL. Topologically, residues 250–273 are cytoplasmic; sequence KTHRQLFEPQEVDGGDAGDDDEEP. The chain crosses the membrane as a helical span at residues 274-294; it reads ALGFASALFWLALMTAVISVL. Residues 295 to 317 are Vacuolar-facing; the sequence is SEYVVGTIEPTSQSWGLSVSFIS. Residues 318–338 traverse the membrane as a helical segment; the sequence is IILLPIVGNAAEHAGAIIFAL. The interval 325–360 is cation selection; it reads GNAAEHAGAIIFALKNKLDITLGVALGSATQISMFV. The Cytoplasmic portion of the chain corresponds to 339–352; it reads KNKLDITLGVALGS. Residues 353–373 form a helical membrane-spanning segment; the sequence is ATQISMFVVPLSVLVAWIMGV. Over 374–378 the chain is Vacuolar; that stretch reads QMDLD. The helical transmembrane segment at 379–399 threads the bilayer; it reads FKLLETGSLFMAVLVTAFTLQ. Residues 400–404 are Cytoplasmic-facing; sequence DGTSH. A helical transmembrane segment spans residues 405 to 425; that stretch reads YLKGILLLLCYIVIGACFFVA. At 426-451 the chain is on the vacuolar side; it reads RQPAGHANSNGALLDVPTGSMSVQAA.

Belongs to the Ca(2+):cation antiporter (CaCA) (TC 2.A.19) family. Cation/proton exchanger (CAX) subfamily. Ubiquitous.

The protein localises to the vacuole membrane. Vacuolar cation/proton exchanger (CAX). Translocates Ca(2+) and other metal ions into vacuoles using the proton gradient formed by H(+)-ATPase and H(+)-pyrophosphatase. This Oryza sativa subsp. japonica (Rice) protein is Vacuolar cation/proton exchanger 1a (CAX1a).